The chain runs to 169 residues: Peptide methionine sulfoxide reductase MsrA (169 aa).

Residue Cys13 is part of the active site.

Belongs to the MsrA Met sulfoxide reductase family.

The enzyme catalyses L-methionyl-[protein] + [thioredoxin]-disulfide + H2O = L-methionyl-(S)-S-oxide-[protein] + [thioredoxin]-dithiol. It catalyses the reaction [thioredoxin]-disulfide + L-methionine + H2O = L-methionine (S)-S-oxide + [thioredoxin]-dithiol. Its function is as follows. Has an important function as a repair enzyme for proteins that have been inactivated by oxidation. Catalyzes the reversible oxidation-reduction of methionine sulfoxide in proteins to methionine. The polypeptide is Peptide methionine sulfoxide reductase MsrA (Mycolicibacterium vanbaalenii (strain DSM 7251 / JCM 13017 / BCRC 16820 / KCTC 9966 / NRRL B-24157 / PYR-1) (Mycobacterium vanbaalenii)).